We begin with the raw amino-acid sequence, 324 residues long: tRNA pseudouridine synthase B (324 aa).

Asp49 (nucleophile) is an active-site residue. Residues 87–107 form a disordered region; sequence RSTDDLEGQPTKTSDKRPSRE.

It belongs to the pseudouridine synthase TruB family. Type 1 subfamily.

It catalyses the reaction uridine(55) in tRNA = pseudouridine(55) in tRNA. Its function is as follows. Responsible for synthesis of pseudouridine from uracil-55 in the psi GC loop of transfer RNAs. In Brucella melitensis biotype 1 (strain ATCC 23456 / CCUG 17765 / NCTC 10094 / 16M), this protein is tRNA pseudouridine synthase B.